The sequence spans 361 residues: Mitogen-activated protein kinase 14 (361 aa).

One can recognise a Protein kinase domain in the interval 32 to 316 (YVPIKPIGRG…VSDALLHPYM (285 aa)). Residues 38–46 (IGRGAYGVV) and Lys61 each bind ATP. Residue Asp158 is the Proton acceptor of the active site. Thr188 is subject to Phosphothreonine. The TXY motif lies at 188–190 (TEY). Tyr190 carries the post-translational modification Phosphotyrosine. Thr193 is subject to Phosphothreonine.

It belongs to the protein kinase superfamily. CMGC Ser/Thr protein kinase family. MAP kinase subfamily. In terms of assembly, interacts with MKK3. Dually phosphorylated on Thr-188 and Tyr-190, which activates the enzyme.

It catalyses the reaction L-seryl-[protein] + ATP = O-phospho-L-seryl-[protein] + ADP + H(+). It carries out the reaction L-threonyl-[protein] + ATP = O-phospho-L-threonyl-[protein] + ADP + H(+). Activated by threonine and tyrosine phosphorylation. This chain is Mitogen-activated protein kinase 14 (MPK14), found in Arabidopsis thaliana (Mouse-ear cress).